Reading from the N-terminus, the 683-residue chain is Zinc finger protein 418 (683 aa).

The KRAB domain occupies 48–123 (VTIEDVTVYF…TPKQGQLRQK (76 aa)). Residues 102–120 (QSLSQTEAPQVRTPKQGQL) are compositionally biased toward polar residues. Disordered stretches follow at residues 102-124 (QSLS…RQKP) and 209-247 (DIPN…QHRL). Residues 225-239 (FHRDKNNSESDEYKK) show a composition bias toward basic and acidic residues. 14 consecutive C2H2-type zinc fingers follow at residues 287–309 (YECH…QRRH), 315–337 (YKCG…CRVH), 343–365 (FECL…QRTH), 371–393 (YECS…QRTH), 399–421 (YECG…QRVH), 427–449 (YHCE…SKIH), 455–477 (YECG…QRTH), 483–505 (YECR…RRIH), 511–533 (YECE…QRVH), 539–561 (YKCE…QRTH), 567–589 (YECA…QKIH), 595–617 (YHCD…QRVH), 623–645 (YTCG…RRIH), and 651–673 (YECD…QLLH).

The protein belongs to the krueppel C2H2-type zinc-finger protein family.

The protein localises to the nucleus. Its function is as follows. Transcriptional repressor. May play a role as regulator of the ubiquitin-proteasome system and autophagy-lysosomal pathway. The polypeptide is Zinc finger protein 418 (Rattus norvegicus (Rat)).